We begin with the raw amino-acid sequence, 282 residues long: Transcription repressor OFP18 (282 aa).

Residues 1–85 (MVRKMKLPFL…YSSFSSTSHA (85 aa)) are disordered. The segment covering 15-35 (SSSSFSSNSSSSSSSWPWPSS) has biased composition (low complexity). The segment covering 36–47 (HQQNLKTISSKA) has biased composition (polar residues). The segment covering 66–85 (SFSSSPSSSSYSSFSSTSHA) has biased composition (low complexity). Positions 139–199 (LSLESNDPYT…FAAFVDLVLN (61 aa)) constitute an OVATE domain.

Expressed in roots and shoots.

Its subcellular location is the nucleus. Functionally, transcriptional repressor that regulates multiple aspects of plant growth and development through the regulation of BEL1-LIKE (BLH) and KNOX TALE (KNAT) homeodomain transcription factors. The protein is Transcription repressor OFP18 (OFP18) of Arabidopsis thaliana (Mouse-ear cress).